A 728-amino-acid chain; its full sequence is Catalase-peroxidase 2 (728 aa).

Positions 91-214 (WHAAGTYRTG…LAAVQMGLIY (124 aa)) form a cross-link, tryptophyl-tyrosyl-methioninium (Trp-Tyr) (with M-240). Residue His92 is the Proton acceptor of the active site. The tryptophyl-tyrosyl-methioninium (Tyr-Met) (with W-91) cross-link spans 214 to 240 (YVNPEGPNGNPDPAKAAVDIRETFARM). His255 provides a ligand contact to heme b. The interval 338-362 (WKPNGDAGANSIPDPYDPSRRRGPT) is disordered.

Belongs to the peroxidase family. Peroxidase/catalase subfamily. As to quaternary structure, homodimer or homotetramer. Heme b serves as cofactor. In terms of processing, formation of the three residue Trp-Tyr-Met cross-link is important for the catalase, but not the peroxidase activity of the enzyme.

It catalyses the reaction H2O2 + AH2 = A + 2 H2O. The enzyme catalyses 2 H2O2 = O2 + 2 H2O. In terms of biological role, bifunctional enzyme with both catalase and broad-spectrum peroxidase activity. This is Catalase-peroxidase 2 from Cupriavidus pinatubonensis (strain JMP 134 / LMG 1197) (Cupriavidus necator (strain JMP 134)).